Here is a 338-residue protein sequence, read N- to C-terminus: Phosphonates-binding periplasmic protein (338 aa).

An N-terminal signal peptide occupies residues 1 to 26; that stretch reads MNAKIIASLAFTSMFSLSTLLSPAHA.

Belongs to the phosphate/phosphite/phosphonate binding protein family. In terms of assembly, the complex is composed of two ATP-binding proteins (PhnC), two transmembrane proteins (PhnE) and a solute-binding protein (PhnD).

The protein resides in the periplasm. In terms of biological role, phosphonate binding protein that is part of the phosphonate uptake system. Exhibits high affinity for 2-aminoethylphosphonate, and somewhat less affinity to ethylphosphonate, methylphosphonate, phosphonoacetate and phenylphosphonate. The chain is Phosphonates-binding periplasmic protein (phnD) from Escherichia coli (strain K12).